Reading from the N-terminus, the 505-residue chain is Glutamate--tRNA ligase (505 aa).

Residues 12–22 (PSPTGALHIGG) carry the 'HIGH' region motif. The 'KMSKS' region signature appears at 260-264 (KLSKR). Residue Lys263 coordinates ATP.

This sequence belongs to the class-I aminoacyl-tRNA synthetase family. Glutamate--tRNA ligase type 1 subfamily. As to quaternary structure, monomer.

It localises to the cytoplasm. It catalyses the reaction tRNA(Glu) + L-glutamate + ATP = L-glutamyl-tRNA(Glu) + AMP + diphosphate. Functionally, catalyzes the attachment of glutamate to tRNA(Glu) in a two-step reaction: glutamate is first activated by ATP to form Glu-AMP and then transferred to the acceptor end of tRNA(Glu). The sequence is that of Glutamate--tRNA ligase from Bacteroides fragilis (strain ATCC 25285 / DSM 2151 / CCUG 4856 / JCM 11019 / LMG 10263 / NCTC 9343 / Onslow / VPI 2553 / EN-2).